Reading from the N-terminus, the 692-residue chain is Proprotein convertase subtilisin/kexin type 9 (692 aa).

A signal peptide spans 1–30 (MGTVSSRRSWWPLPLPLLLLLLLGLAGARA). A propeptide spanning residues 31-152 (QEDEDGDYEE…IEEDSSVFAQ (122 aa)) is cleaved from the precursor. Tyr-38 carries the post-translational modification Sulfotyrosine. Residue Ser-47 is modified to Phosphoserine. The Inhibitor I9 domain occupies 77–149 (TYVVVLKEET…VDYIEEDSSV (73 aa)). In terms of domain architecture, Peptidase S8 spans 155-444 (PWNLERITPA…VLTPNLVAAL (290 aa)). Active-site charge relay system residues include Asp-186 and His-226. Disulfide bonds link Cys-223–Cys-255 and Cys-323–Cys-358. Residue Ser-386 is the Charge relay system of the active site. Residues 450 to 692 (RAGWQLFCRT…HLVQASQELQ (243 aa)) form a C-terminal domain region. Disulfide bonds link Cys-457–Cys-527, Cys-477–Cys-526, and Cys-486–Cys-509. Asn-533 carries N-linked (GlcNAc...) asparagine glycosylation. Intrachain disulfides connect Cys-534-Cys-601, Cys-552-Cys-600, Cys-562-Cys-588, Cys-608-Cys-679, Cys-626-Cys-678, and Cys-635-Cys-654. Ser-688 bears the Phosphoserine mark.

Belongs to the peptidase S8 family. As to quaternary structure, monomer. Can self-associate to form dimers and higher multimers which may have increased LDLR degrading activity. The precursor protein but not the mature protein may form multimers. Interacts with APOB, VLDLR, LRP8/APOER2 and BACE1. The full-length immature form (pro-PCSK9) interacts with SCNN1A, SCNN1B and SCNN1G. The pro-PCSK9 form (via C-terminal domain) interacts with LDLR. Interacts (via the C-terminal domain) with ANXA2 (via repeat Annexin 1); the interaction inhibits the degradation of LDLR. It depends on Ca(2+) as a cofactor. In terms of processing, cleavage by furin and PCSK5 generates a truncated inactive protein that is unable to induce LDLR degradation. Undergoes autocatalytic cleavage in the endoplasmic reticulum to release the propeptide from the N-terminus and the cleavage of the propeptide is strictly required for its maturation and activation. The cleaved propeptide however remains associated with the catalytic domain through non-covalent interactions, preventing potential substrates from accessing its active site. As a result, it is secreted from cells as a propeptide-containing, enzymatically inactive protein. Post-translationally, phosphorylation protects the propeptide against proteolysis.

It localises to the cytoplasm. The protein localises to the secreted. The protein resides in the endosome. It is found in the lysosome. Its subcellular location is the cell surface. It localises to the endoplasmic reticulum. The protein localises to the golgi apparatus. Its proteolytic activity is autoinhibited by the non-covalent binding of the propeptide to the catalytic domain. Inhibited by EGTA. Functionally, crucial player in the regulation of plasma cholesterol homeostasis. Binds to low-density lipid receptor family members: low density lipoprotein receptor (LDLR), very low density lipoprotein receptor (VLDLR), apolipoprotein E receptor (LRP1/APOER) and apolipoprotein receptor 2 (LRP8/APOER2), and promotes their degradation in intracellular acidic compartments. Acts via a non-proteolytic mechanism to enhance the degradation of the hepatic LDLR through a clathrin LDLRAP1/ARH-mediated pathway. May prevent the recycling of LDLR from endosomes to the cell surface or direct it to lysosomes for degradation. Can induce ubiquitination of LDLR leading to its subsequent degradation. Inhibits intracellular degradation of APOB via the autophagosome/lysosome pathway in a LDLR-independent manner. Involved in the disposal of non-acetylated intermediates of BACE1 in the early secretory pathway. Inhibits epithelial Na(+) channel (ENaC)-mediated Na(+) absorption by reducing ENaC surface expression primarily by increasing its proteasomal degradation. Regulates neuronal apoptosis via modulation of LRP8/APOER2 levels and related anti-apoptotic signaling pathways. The polypeptide is Proprotein convertase subtilisin/kexin type 9 (PCSK9) (Colobus guereza (Mantled guereza)).